Here is a 431-residue protein sequence, read N- to C-terminus: Serine hydroxymethyltransferase 3 (431 aa).

(6S)-5,6,7,8-tetrahydrofolate is bound by residues Leu-131 and Gly-135–Leu-137. At Lys-240 the chain carries N6-(pyridoxal phosphate)lysine.

This sequence belongs to the SHMT family. In terms of assembly, homodimer. Requires pyridoxal 5'-phosphate as cofactor.

The protein resides in the cytoplasm. It catalyses the reaction (6R)-5,10-methylene-5,6,7,8-tetrahydrofolate + glycine + H2O = (6S)-5,6,7,8-tetrahydrofolate + L-serine. Its pathway is one-carbon metabolism; tetrahydrofolate interconversion. It functions in the pathway amino-acid biosynthesis; glycine biosynthesis; glycine from L-serine: step 1/1. In terms of biological role, catalyzes the reversible interconversion of serine and glycine with tetrahydrofolate (THF) serving as the one-carbon carrier. This reaction serves as the major source of one-carbon groups required for the biosynthesis of purines, thymidylate, methionine, and other important biomolecules. Also exhibits THF-independent aldolase activity toward beta-hydroxyamino acids, producing glycine and aldehydes, via a retro-aldol mechanism. The sequence is that of Serine hydroxymethyltransferase 3 from Colwellia psychrerythraea (strain 34H / ATCC BAA-681) (Vibrio psychroerythus).